The primary structure comprises 309 residues: Homoserine kinase (309 aa).

91-101 (PIGSGLGSSAC) is an ATP binding site.

The protein belongs to the GHMP kinase family. Homoserine kinase subfamily.

The protein localises to the cytoplasm. It carries out the reaction L-homoserine + ATP = O-phospho-L-homoserine + ADP + H(+). It participates in amino-acid biosynthesis; L-threonine biosynthesis; L-threonine from L-aspartate: step 4/5. Functionally, catalyzes the ATP-dependent phosphorylation of L-homoserine to L-homoserine phosphate. The chain is Homoserine kinase from Photorhabdus laumondii subsp. laumondii (strain DSM 15139 / CIP 105565 / TT01) (Photorhabdus luminescens subsp. laumondii).